The following is a 438-amino-acid chain: Trigger factor (438 aa).

The 86-residue stretch at glycine 162–proline 247 folds into the PPIase FKBP-type domain.

Belongs to the FKBP-type PPIase family. Tig subfamily.

The protein resides in the cytoplasm. It carries out the reaction [protein]-peptidylproline (omega=180) = [protein]-peptidylproline (omega=0). Functionally, involved in protein export. Acts as a chaperone by maintaining the newly synthesized protein in an open conformation. Functions as a peptidyl-prolyl cis-trans isomerase. In Caldicellulosiruptor bescii (strain ATCC BAA-1888 / DSM 6725 / KCTC 15123 / Z-1320) (Anaerocellum thermophilum), this protein is Trigger factor.